The primary structure comprises 1263 residues: Topoisomerase 1-associated factor 1 (1263 aa).

2 disordered regions span residues 1042-1098 and 1178-1263; these read ERQL…DDSQ and VEES…DEEE. The span at 1060 to 1071 shows a compositional bias: basic residues; the sequence is TKGKARKKSKEK. The segment covering 1179–1189 has biased composition (acidic residues); it reads EESDNDDEVEE. Over residues 1211-1226 the composition is skewed to polar residues; that stretch reads VDTQQDLSDNTSNTSD.

This sequence belongs to the timeless family. As to quaternary structure, component of the fork protection complex (FPC) consisting of TOF1 and CSM3.

It is found in the nucleus. In terms of biological role, forms a fork protection complex (FPC) with CSM3 and which is required for chromosome segregation during meiosis and DNA damage repair. FPC coordinates leading and lagging strand synthesis and moves with the replication fork. FPC stabilizes replication forks in a configuration that is recognized by replication checkpoint sensors. This chain is Topoisomerase 1-associated factor 1 (YBL053), found in Candida albicans (strain SC5314 / ATCC MYA-2876) (Yeast).